Consider the following 309-residue polypeptide: Porphobilinogen deaminase (309 aa).

An S-(dipyrrolylmethanemethyl)cysteine modification is found at cysteine 242.

It belongs to the HMBS family. As to quaternary structure, monomer. Dipyrromethane is required as a cofactor.

It catalyses the reaction 4 porphobilinogen + H2O = hydroxymethylbilane + 4 NH4(+). Its pathway is porphyrin-containing compound metabolism; protoporphyrin-IX biosynthesis; coproporphyrinogen-III from 5-aminolevulinate: step 2/4. Its function is as follows. Tetrapolymerization of the monopyrrole PBG into the hydroxymethylbilane pre-uroporphyrinogen in several discrete steps. The protein is Porphobilinogen deaminase of Hamiltonella defensa subsp. Acyrthosiphon pisum (strain 5AT).